Here is a 375-residue protein sequence, read N- to C-terminus: Chaperone protein DnaJ (375 aa).

The J domain maps to 5–69 (DYYEILGVSK…QKRAAYDQYG (65 aa)). The CR-type zinc-finger motif lies at 130 to 208 (GVTKEIRIPT…CHGHGRVEKA (79 aa)). Residues C143, C146, C160, C163, C182, C185, C196, and C199 each contribute to the Zn(2+) site. CXXCXGXG motif repeat units lie at residues 143-150 (CGVCHGSG), 160-167 (CPTCHGQG), 182-189 (CPHCHGRG), and 196-203 (CNSCHGHG).

The protein belongs to the DnaJ family. In terms of assembly, homodimer. It depends on Zn(2+) as a cofactor.

Its subcellular location is the cytoplasm. Functionally, participates actively in the response to hyperosmotic and heat shock by preventing the aggregation of stress-denatured proteins and by disaggregating proteins, also in an autonomous, DnaK-independent fashion. Unfolded proteins bind initially to DnaJ; upon interaction with the DnaJ-bound protein, DnaK hydrolyzes its bound ATP, resulting in the formation of a stable complex. GrpE releases ADP from DnaK; ATP binding to DnaK triggers the release of the substrate protein, thus completing the reaction cycle. Several rounds of ATP-dependent interactions between DnaJ, DnaK and GrpE are required for fully efficient folding. Also involved, together with DnaK and GrpE, in the DNA replication of plasmids through activation of initiation proteins. The polypeptide is Chaperone protein DnaJ (Serratia proteamaculans (strain 568)).